We begin with the raw amino-acid sequence, 142 residues long: Small ribosomal subunit protein bS6 (142 aa).

Residues 110–133 (NKKPSHAKEKHEKTEHTHSHHLEE) show a composition bias toward basic and acidic residues. The interval 110–142 (NKKPSHAKEKHEKTEHTHSHHLEEAESVGSHSE) is disordered.

It belongs to the bacterial ribosomal protein bS6 family.

Functionally, binds together with bS18 to 16S ribosomal RNA. The chain is Small ribosomal subunit protein bS6 from Helicobacter pylori (strain HPAG1).